Here is a 473-residue protein sequence, read N- to C-terminus: Dol-P-Glc:Glc(2)Man(9)GlcNAc(2)-PP-Dol alpha-1,2-glucosyltransferase (473 aa).

Over 1-6 (MAQLEG) the chain is Cytoplasmic. A helical transmembrane segment spans residues 7–27 (YCFSAALSCTFLVSCLLFSAF). The Extracellular segment spans residues 28–64 (SRALREPYMDEIFHLPQAQRYCEGHFSLSQWDPMITT). Residues 65–85 (LPGLYLVSVGVVKPAIWIFAW) form a helical membrane-spanning segment. Residues 86-97 (SEHVVCSIGMLR) are Cytoplasmic-facing. Residues 98–118 (FVNLLFSVGNFYLLYLLFHKV) form a helical membrane-spanning segment. The Extracellular portion of the chain corresponds to 119–126 (QPRNKAAS). A helical membrane pass occupies residues 127-147 (SIQRVLSTLTLAVFPTLYFFN). The Cytoplasmic portion of the chain corresponds to 148-150 (FLY). Residues 151–171 (YTEAGSMFFTLFAYLMCLYGN) form a helical membrane-spanning segment. At 172-175 (HKTS) the chain is on the extracellular side. Residues 176-196 (AFLGFCGFMFRQTNIIWAVFC) traverse the membrane as a helical segment. At 197–256 (AGNVIAQKLTEAWKTELQKKEDRLPPIKGPFAEFRKILQFLLAYSMSFKNLSMLFCLTWP) the chain is on the cytoplasmic side. Residues 257-277 (YILLGFLFCAFVVVNGGIVIG) form a helical membrane-spanning segment. Residues 278 to 283 (DRSSHE) are Extracellular-facing. A helical membrane pass occupies residues 284–304 (ACLHFPQLFYFFSFTLFFSFP). Residues 305 to 317 (HLLSPSKIKTFLS) are Cytoplasmic-facing. Residues 318 to 338 (LVWKHGILFLVVTLVSVFLVW) form a helical membrane-spanning segment. Over 339–365 (KFTYAHKYLLADNRHYTFYVWKRVFQR) the chain is Extracellular. The helical transmembrane segment at 366–386 (YAILKYLLVPAYIFAGWSIAD) threads the bilayer. At 387-392 (SLKSKP) the chain is on the cytoplasmic side. Residues 393-413 (IFWNLMFFICLFIVIVPQKLL) traverse the membrane as a helical segment. Over 414–436 (EFRYFILPYVIYRLNITLPPTSR) the chain is Extracellular. Residues 437-457 (LVCELSCYAIVNFITFYIFLN) form a helical membrane-spanning segment. The Cytoplasmic segment spans residues 458–473 (KTFQWPNSQDIQRFMW).

It belongs to the ALG10 glucosyltransferase family. As to quaternary structure, interacts with KCNH1; may regulate KCNH1, possibly by regulating its N-glycosylation. Interacts with KCNH2; may reduce KCNH2 sensitivity to classic proarrhythmic drug blockade, possibly by regulating its N-glycosylation. As to expression, highly expressed in heart, placenta, liver, kidney and pancreas. Weakly expressed in lung, skeletal muscle and brain.

The protein localises to the endoplasmic reticulum membrane. The catalysed reaction is an alpha-D-Glc-(1-&gt;3)-alpha-D-Glc-(1-&gt;3)-alpha-D-Man-(1-&gt;2)-alpha-D-Man-(1-&gt;2)-alpha-D-Man-(1-&gt;3)-[alpha-D-Man-(1-&gt;2)-alpha-D-Man-(1-&gt;3)-[alpha-D-Man-(1-&gt;2)-alpha-D-Man-(1-&gt;6)]-alpha-D-Man-(1-&gt;6)]-beta-D-Man-(1-&gt;4)-beta-D-GlcNAc-(1-&gt;4)-alpha-D-GlcNAc-diphospho-di-trans,poly-cis-dolichol + a di-trans,poly-cis-dolichyl beta-D-glucosyl phosphate = a alpha-D-Glc-(1-&gt;2)-alpha-D-Glc-(1-&gt;3)-alpha-D-Glc-(1-&gt;3)-alpha-D-Man-(1-&gt;2)-alpha-D-Man-(1-&gt;2)-alpha-D-Man-(1-&gt;3)-[alpha-D-Man-(1-&gt;2)-alpha-D-Man-(1-&gt;3)-[alpha-D-Man-(1-&gt;2)-alpha-D-Man-(1-&gt;6)]-alpha-D-Man-(1-&gt;6)]-beta-D-Man-(1-&gt;4)-beta-D-GlcNAc-(1-&gt;4)-alpha-D-GlcNAc-diphospho-di-trans,poly-cis-dolichol + a di-trans,poly-cis-dolichyl phosphate + H(+). The protein operates within protein modification; protein glycosylation. Functionally, dol-P-Glc:Glc(2)Man(9)GlcNAc(2)-PP-Dol alpha-1,2-glucosyltransferase that operates in the biosynthetic pathway of dolichol-linked oligosaccharides, the glycan precursors employed in protein asparagine (N)-glycosylation. The assembly of dolichol-linked oligosaccharides begins on the cytosolic side of the endoplasmic reticulum membrane and finishes in its lumen. The sequential addition of sugars to dolichol pyrophosphate produces dolichol-linked oligosaccharides containing fourteen sugars, including two GlcNAcs, nine mannoses and three glucoses. Once assembled, the oligosaccharide is transferred from the lipid to nascent proteins by oligosaccharyltransferases. In the lumen of the endoplasmic reticulum, adds the third and last glucose residue from dolichyl phosphate glucose (Dol-P-Glc) onto the lipid-linked oligosaccharide intermediate Glc(2)Man(9)GlcNAc(2)-PP-Dol to produce Glc(3)Man(9)GlcNAc(2)-PP-Dol. This chain is Dol-P-Glc:Glc(2)Man(9)GlcNAc(2)-PP-Dol alpha-1,2-glucosyltransferase, found in Homo sapiens (Human).